We begin with the raw amino-acid sequence, 582 residues long: tRNA-guanine(15) transglycosylase (582 aa).

Residue aspartate 95 is the Nucleophile of the active site. Aspartate 130 and glycine 196 together coordinate substrate. 3 residues coordinate Zn(2+): cysteine 279, cysteine 281, and cysteine 284. Positions arginine 507–glutamate 582 constitute a PUA domain.

Belongs to the archaeosine tRNA-ribosyltransferase family. Homodimer. It depends on Zn(2+) as a cofactor.

The enzyme catalyses guanosine(15) in tRNA + 7-cyano-7-deazaguanine = 7-cyano-7-carbaguanosine(15) in tRNA + guanine. Its pathway is tRNA modification; archaeosine-tRNA biosynthesis. Its function is as follows. Exchanges the guanine residue with 7-cyano-7-deazaguanine (preQ0) at position 15 in the dihydrouridine loop (D-loop) of archaeal tRNAs. This Pyrococcus horikoshii (strain ATCC 700860 / DSM 12428 / JCM 9974 / NBRC 100139 / OT-3) protein is tRNA-guanine(15) transglycosylase (tgtA).